A 504-amino-acid polypeptide reads, in one-letter code: Putative F-box/FBD/LRR-repeat protein At3g59240 (504 aa).

The F-box domain maps to 7–60 (KDIISDLPEALICHLLSFVPTKEAALTSLLSEKWRYLFAFAPILDFDDSVWMQS). 7 LRR repeats span residues 69–95 (HRKF…SLNC), 145–171 (RIRT…DLSS), 173–198 (WFRD…TMSD), 286–312 (TNLF…TFCC), 329–354 (DKDV…VFKG), 369–396 (CLCK…KFGE), and 403–428 (DEEK…ILHY). The 46-residue stretch at 382-427 (SSSPVKVLKILKFGEVASYFGDEEKQLELVKYFLETMPNLEQMILH) folds into the FBD domain.

This chain is Putative F-box/FBD/LRR-repeat protein At3g59240, found in Arabidopsis thaliana (Mouse-ear cress).